A 114-amino-acid chain; its full sequence is Probable acid stress chaperone HdeA (114 aa).

A signal peptide spans 1–26; that stretch reads MIKALFNKNTALAAVTILALSGGAMA. Cys-46 and Cys-94 are disulfide-bonded.

It belongs to the HdeA family.

It localises to the periplasm. Its function is as follows. Required for optimal acid stress protection. Exhibits a chaperone-like activity only at low pH by suppressing non-specifically the aggregation of denaturated periplasmic proteins. This Brucella suis biovar 1 (strain 1330) protein is Probable acid stress chaperone HdeA.